A 301-amino-acid chain; its full sequence is Zinc finger protein LEE1 (301 aa).

The segment at 1–25 (MDAFENMSVSNHPGGNARRNSQSAN) is disordered. The segment covering 7-25 (MSVSNHPGGNARRNSQSAN) has biased composition (polar residues). Residues S21 and S30 each carry the phosphoserine modification. 2 C3H1-type zinc fingers span residues 87–114 (DYSHVPCKFFKMGNCQAGSSCPFSHSPD) and 123–145 (PCKYFAKGNCKFGNKCVNAHVLP). S282 is modified (phosphoserine).

In Saccharomyces cerevisiae (strain ATCC 204508 / S288c) (Baker's yeast), this protein is Zinc finger protein LEE1 (LEE1).